A 418-amino-acid chain; its full sequence is Serine hydroxymethyltransferase (418 aa).

Residues leucine 121 and 125 to 127 (GHL) contribute to the (6S)-5,6,7,8-tetrahydrofolate site. Lysine 230 carries the N6-(pyridoxal phosphate)lysine modification. 355-357 (SPF) lines the (6S)-5,6,7,8-tetrahydrofolate pocket.

This sequence belongs to the SHMT family. In terms of assembly, homodimer. It depends on pyridoxal 5'-phosphate as a cofactor.

The protein localises to the cytoplasm. The enzyme catalyses (6R)-5,10-methylene-5,6,7,8-tetrahydrofolate + glycine + H2O = (6S)-5,6,7,8-tetrahydrofolate + L-serine. Its pathway is one-carbon metabolism; tetrahydrofolate interconversion. It participates in amino-acid biosynthesis; glycine biosynthesis; glycine from L-serine: step 1/1. Catalyzes the reversible interconversion of serine and glycine with tetrahydrofolate (THF) serving as the one-carbon carrier. This reaction serves as the major source of one-carbon groups required for the biosynthesis of purines, thymidylate, methionine, and other important biomolecules. Also exhibits THF-independent aldolase activity toward beta-hydroxyamino acids, producing glycine and aldehydes, via a retro-aldol mechanism. This is Serine hydroxymethyltransferase from Streptococcus pyogenes serotype M5 (strain Manfredo).